The following is a 165-amino-acid chain: MRKIIAEPLTKDAFAPFGDVIEAEEGTSFPINNGKTQRFHDLAKVEVGGENARVMVSIARGQPYDLPLTLNMVERHPLGSQAFMPLTSSPFLVIVCPDESGRPGVPRAFITKPGQGVNYARNTWHGVLTPIGEEQDFLIVDRGGEGNNLEEFFFPEPYEIHLPER.

Belongs to the ureidoglycolate lyase family. In terms of assembly, homodimer. Ni(2+) is required as a cofactor.

It carries out the reaction (S)-ureidoglycolate = urea + glyoxylate. The protein operates within nitrogen metabolism; (S)-allantoin degradation. Catalyzes the catabolism of the allantoin degradation intermediate (S)-ureidoglycolate, generating urea and glyoxylate. Involved in the utilization of allantoin as nitrogen source. This chain is Ureidoglycolate lyase, found in Chelativorans sp. (strain BNC1).